The following is a 342-amino-acid chain: Dihydroorotate dehydrogenase (quinone) (342 aa).

FMN-binding positions include alanine 60–lysine 64 and threonine 84. Lysine 64 contributes to the substrate binding site. Residue asparagine 109 to phenylalanine 113 participates in substrate binding. The FMN site is built by asparagine 137 and asparagine 170. Asparagine 170 contacts substrate. The active-site Nucleophile is the serine 173. Asparagine 175 is a binding site for substrate. Residues lysine 215 and threonine 243 each coordinate FMN. Asparagine 244 to threonine 245 serves as a coordination point for substrate. FMN contacts are provided by residues glycine 266, glycine 295, and tyrosine 316–threonine 317.

It belongs to the dihydroorotate dehydrogenase family. Type 2 subfamily. In terms of assembly, monomer. Requires FMN as cofactor.

Its subcellular location is the cell membrane. The enzyme catalyses (S)-dihydroorotate + a quinone = orotate + a quinol. It participates in pyrimidine metabolism; UMP biosynthesis via de novo pathway; orotate from (S)-dihydroorotate (quinone route): step 1/1. Its function is as follows. Catalyzes the conversion of dihydroorotate to orotate with quinone as electron acceptor. This is Dihydroorotate dehydrogenase (quinone) from Halorhodospira halophila (strain DSM 244 / SL1) (Ectothiorhodospira halophila (strain DSM 244 / SL1)).